A 398-amino-acid polypeptide reads, in one-letter code: Abhydrolase domain-containing protein 2 (398 aa).

The Cytoplasmic portion of the chain corresponds to 1–4 (MSTA). A helical; Signal-anchor for type II membrane protein transmembrane segment spans residues 5–22 (FLTLIAVIVCILFRILNV). Topologically, residues 23-398 (HSQPLKPSVW…MMHEVGKVAP (376 aa)) are extracellular. Residues 113–365 (VAICPGIANS…HGGHLGFYEG (253 aa)) form the AB hydrolase-1 domain. Active-site charge relay system residues include Ser-192, Asp-328, and His-359.

Belongs to the AB hydrolase superfamily. AB hydrolase 4 family.

It localises to the membrane. The polypeptide is Abhydrolase domain-containing protein 2 (Hydr2) (Drosophila melanogaster (Fruit fly)).